A 218-amino-acid polypeptide reads, in one-letter code: tRNA (cytidine(56)-2'-O)-methyltransferase (218 aa).

Residues Leu-81, 106–110 (GAEKV), and 124–131 (IGNQPHSE) contribute to the S-adenosyl-L-methionine site. Residues 170–218 (KVGEEGPSGGAPGVRAERGRGGRGEGVQGADEVRGHKRGATDRDLGDET) form a disordered region. Over residues 200–218 (DEVRGHKRGATDRDLGDET) the composition is skewed to basic and acidic residues.

The protein belongs to the aTrm56 family. In terms of assembly, homodimer.

Its subcellular location is the cytoplasm. The enzyme catalyses cytidine(56) in tRNA + S-adenosyl-L-methionine = 2'-O-methylcytidine(56) in tRNA + S-adenosyl-L-homocysteine + H(+). Functionally, specifically catalyzes the AdoMet-dependent 2'-O-ribose methylation of cytidine at position 56 in tRNAs. This chain is tRNA (cytidine(56)-2'-O)-methyltransferase, found in Ignicoccus hospitalis (strain KIN4/I / DSM 18386 / JCM 14125).